The sequence spans 249 residues: 5'-nucleotidase SurE (249 aa).

4 residues coordinate a divalent metal cation: Asp8, Asp9, Ser39, and Asn91.

Belongs to the SurE nucleotidase family. The cofactor is a divalent metal cation.

The protein resides in the cytoplasm. The enzyme catalyses a ribonucleoside 5'-phosphate + H2O = a ribonucleoside + phosphate. Its function is as follows. Nucleotidase that shows phosphatase activity on nucleoside 5'-monophosphates. In Pseudomonas aeruginosa (strain UCBPP-PA14), this protein is 5'-nucleotidase SurE.